Here is a 914-residue protein sequence, read N- to C-terminus: Eukaryotic translation initiation factor 3 subunit C-like protein (914 aa).

The tract at residues 1–44 (MSRFFTTGSDSESESSLSGEELVTKPVGGNYGKQPLLLSEDEED) is disordered. The segment covering 8-21 (GSDSESESSLSGEE) has biased composition (low complexity). S9, S11, S13, S15, S16, S18, and S39 each carry phosphoserine. The residue at position 99 (K99) is an N6-acetyllysine. Disordered regions lie at residues 157–302 (TSYK…GGEW) and 523–543 (QLTPPEGSSKSEQDQAENEGE). Phosphoserine occurs at positions 166, 178, 181, and 182. A compositionally biased stretch (acidic residues) spans 166-190 (SADEDAEKNEEDSEGSSDEDEDEDG). Basic and acidic residues predominate over residues 199 to 216 (KKSEAPSGESRKFLKKMD). Residues 217–232 (DEDEDSEDSEDDEDWD) show a composition bias toward acidic residues. Over residues 261–278 (PTTDEDKKAAEKKREDKA) the composition is skewed to basic and acidic residues. Positions 291–300 (EEEEEDNEGG) are enriched in acidic residues. Residues 523 to 532 (QLTPPEGSSK) show a composition bias toward polar residues. The residue at position 525 (T525) is a Phosphothreonine. Residue K644 is modified to N6-acetyllysine. In terms of domain architecture, PCI spans 674–850 (FHLHINLELL…QTVVMHRTEP (177 aa)). A disordered region spans residues 886–914 (FRDQKDGYRKNEGYMRRGGYRQQQSQTAY). Basic and acidic residues predominate over residues 887 to 900 (RDQKDGYRKNEGYM). S910 is modified (phosphoserine).

This sequence belongs to the eIF-3 subunit C family. In terms of assembly, component of the eukaryotic translation initiation factor 3 (eIF-3) complex, which is composed of 13 subunits: EIF3A, EIF3B, EIF3C, EIF3D, EIF3E, EIF3F, EIF3G, EIF3H, EIF3I, EIF3J, EIF3K, EIF3L and EIF3M. The eIF-3 complex appears to include 3 stable modules: module A is composed of EIF3A, EIF3B, EIF3G and EIF3I; module B is composed of EIF3F, EIF3H, and EIF3M; and module C is composed of EIF3C, EIF3D, EIF3E, EIF3K and EIF3L. EIF3C of module C binds EIF3B of module A and EIF3H of module B, thereby linking the three modules. EIF3J is a labile subunit that binds to the eIF-3 complex via EIF3B. The eIF-3 complex interacts with RPS6KB1 under conditions of nutrient depletion. Mitogenic stimulation leads to binding and activation of a complex composed of MTOR and RPTOR, leading to phosphorylation and release of RPS6KB1 and binding of EIF4B to eIF-3. Post-translationally, phosphorylated. Phosphorylation is enhanced upon serum stimulation.

Its subcellular location is the cytoplasm. Its function is as follows. Component of the eukaryotic translation initiation factor 3 (eIF-3) complex, which is required for several steps in the initiation of protein synthesis. The eIF-3 complex associates with the 40S ribosome and facilitates the recruitment of eIF-1, eIF-1A, eIF-2:GTP:methionyl-tRNAi and eIF-5 to form the 43S pre-initiation complex (43S PIC). The eIF-3 complex stimulates mRNA recruitment to the 43S PIC and scanning of the mRNA for AUG recognition. The eIF-3 complex is also required for disassembly and recycling of post-termination ribosomal complexes and subsequently prevents premature joining of the 40S and 60S ribosomal subunits prior to initiation. The eIF-3 complex specifically targets and initiates translation of a subset of mRNAs involved in cell proliferation, including cell cycling, differentiation and apoptosis, and uses different modes of RNA stem-loop binding to exert either translational activation or repression. This Homo sapiens (Human) protein is Eukaryotic translation initiation factor 3 subunit C-like protein (EIF3CL).